The sequence spans 471 residues: Argininosuccinate lyase (471 aa).

It belongs to the lyase 1 family. Argininosuccinate lyase subfamily.

The protein localises to the cytoplasm. The catalysed reaction is 2-(N(omega)-L-arginino)succinate = fumarate + L-arginine. It functions in the pathway amino-acid biosynthesis; L-arginine biosynthesis; L-arginine from L-ornithine and carbamoyl phosphate: step 3/3. The polypeptide is Argininosuccinate lyase (Deinococcus radiodurans (strain ATCC 13939 / DSM 20539 / JCM 16871 / CCUG 27074 / LMG 4051 / NBRC 15346 / NCIMB 9279 / VKM B-1422 / R1)).